The sequence spans 122 residues: Large ribosomal subunit protein uL14c (122 aa).

This sequence belongs to the universal ribosomal protein uL14 family. In terms of assembly, part of the 50S ribosomal subunit.

The protein localises to the plastid. It is found in the chloroplast. Binds to 23S rRNA. In Physcomitrium patens (Spreading-leaved earth moss), this protein is Large ribosomal subunit protein uL14c.